A 183-amino-acid polypeptide reads, in one-letter code: Apo-citrate lyase phosphoribosyl-dephospho-CoA transferase (183 aa).

This sequence belongs to the CitX family.

It carries out the reaction apo-[citrate lyase ACP] + 2'-(5''-triphospho-alpha-D-ribosyl)-3'-dephospho-CoA = holo-[citrate lyase ACP] + diphosphate. Functionally, transfers 2-(5''-triphosphoribosyl)-3'-dephosphocoenzyme-A on a serine residue to the apo-acyl carrier protein (gamma chain) of the citrate lyase to yield holo-acyl carrier protein. In Citrobacter koseri (strain ATCC BAA-895 / CDC 4225-83 / SGSC4696), this protein is Apo-citrate lyase phosphoribosyl-dephospho-CoA transferase.